Consider the following 99-residue polypeptide: Large ribosomal subunit protein uL23 (99 aa).

This sequence belongs to the universal ribosomal protein uL23 family. As to quaternary structure, part of the 50S ribosomal subunit. Contacts protein L29, and trigger factor when it is bound to the ribosome.

In terms of biological role, one of the early assembly proteins it binds 23S rRNA. One of the proteins that surrounds the polypeptide exit tunnel on the outside of the ribosome. Forms the main docking site for trigger factor binding to the ribosome. The sequence is that of Large ribosomal subunit protein uL23 from Stutzerimonas stutzeri (strain A1501) (Pseudomonas stutzeri).